The chain runs to 445 residues: Phosphoglucosamine mutase (445 aa).

Serine 99 serves as the catalytic Phosphoserine intermediate. Mg(2+)-binding residues include serine 99, aspartate 242, aspartate 244, and aspartate 246. Serine 99 carries the post-translational modification Phosphoserine.

The protein belongs to the phosphohexose mutase family. Mg(2+) is required as a cofactor. Activated by phosphorylation.

It catalyses the reaction alpha-D-glucosamine 1-phosphate = D-glucosamine 6-phosphate. In terms of biological role, catalyzes the conversion of glucosamine-6-phosphate to glucosamine-1-phosphate. In Helicobacter pylori (strain P12), this protein is Phosphoglucosamine mutase.